The primary structure comprises 186 residues: MGKPYIRRQLNLSLNLEAKKAVVAEVAAVASQSHSAVAIEYRGLTVAEITKLRVAARKGDVYLRVVRNTLASRALEGTDFDCMREGLTGPLMLAFSREEPSAAARVIRDFGKEHPKLVVKMGCLGGRLLPPEGVENLAKMPTKEQAVAMLMGVLQAPIGKFARTLAEPTAKLVRTVAAVRDQKQAT.

The protein belongs to the universal ribosomal protein uL10 family. As to quaternary structure, part of the ribosomal stalk of the 50S ribosomal subunit. The N-terminus interacts with L11 and the large rRNA to form the base of the stalk. The C-terminus forms an elongated spine to which L12 dimers bind in a sequential fashion forming a multimeric L10(L12)X complex.

Forms part of the ribosomal stalk, playing a central role in the interaction of the ribosome with GTP-bound translation factors. The chain is Large ribosomal subunit protein uL10 from Nitrosococcus oceani (strain ATCC 19707 / BCRC 17464 / JCM 30415 / NCIMB 11848 / C-107).